We begin with the raw amino-acid sequence, 143 residues long: Sperm mitochondrial-associated cysteine-rich protein (143 aa).

S37, S44, and S110 each carry phosphoserine. Residues 101–143 (CCSSENKTESDSDTSGQTLEKGSQSPQSPPGAQGNWNQKKSNK) form a disordered region. The segment covering 113–126 (DTSGQTLEKGSQSP) has biased composition (polar residues). Position 128 is a phosphoserine (S128). A compositionally biased stretch (polar residues) spans 134 to 143 (GNWNQKKSNK).

In terms of tissue distribution, testis. Is selectively expressed in the spermatids of seminiferous tubules.

The protein localises to the cytoplasm. The protein resides in the mitochondrion membrane. Involved in sperm motility. Its absence is associated with genetic background dependent male infertility. Infertility may be due to reduced sperm motility in the female reproductive tract and inability to penetrate the oocyte zona pellucida. The polypeptide is Sperm mitochondrial-associated cysteine-rich protein (Smcp) (Mus musculus (Mouse)).